A 98-amino-acid polypeptide reads, in one-letter code: Cytochrome b (98 aa).

3 helical membrane passes run 1 to 18 (LLGL…FLAM), 42 to 63 (WLIR…YLHV), and 78 to 98 (WNIG…GYVL). 2 residues coordinate heme b: His48 and His62.

The protein belongs to the cytochrome b family. The cytochrome bc1 complex contains 3 respiratory subunits (MT-CYB, CYC1 and UQCRFS1), 2 core proteins (UQCRC1 and UQCRC2) and probably 6 low-molecular weight proteins. Heme b serves as cofactor.

It localises to the mitochondrion inner membrane. In terms of biological role, component of the ubiquinol-cytochrome c reductase complex (complex III or cytochrome b-c1 complex) that is part of the mitochondrial respiratory chain. The b-c1 complex mediates electron transfer from ubiquinol to cytochrome c. Contributes to the generation of a proton gradient across the mitochondrial membrane that is then used for ATP synthesis. This Scaphirhynchus platorynchus (Shovelnose sturgeon) protein is Cytochrome b (mt-cyb).